Reading from the N-terminus, the 338-residue chain is Decarboxylase macB (338 aa).

Residues His7, His9, His159, and Asp283 each coordinate Zn(2+).

It belongs to the metallo-dependent hydrolases superfamily. ACMSD family.

It carries out the reaction 6-methylsalicylate + H(+) = 3-methylphenol + CO2. Its pathway is secondary metabolite biosynthesis; terpenoid biosynthesis. Functionally, decarboxylase; part of the gene cluster that mediates the biosynthesis of macrophorins, isoprenoid epoxycyclohexenones containing cyclized drimane moieties. The first step of the pathway is the synthesis of 6-methylsalicylic acid (6-MSA) by the polyketide synthase macA. 6-MSA is then converted to m-cresol by the decarboxylase macB. The cytochrome P450 monooxygenase macC then catalyzes the oxidation of m-cresol to toluquinol. Epoxidation of toluquinol is then performed by the short chain dehydrogenase macD, with the help of macE, and a further prenylation by macG leads to 7-deacetoxyyanuthone A. The next step is the hydroxylation of C-22 of 7-deacetoxyyanuthone A by the cytochrome P450 monooxygenase macH to yield 22-deacetylyanuthone A. O-Mevalon transferase macI then attaches mevalon to the hydroxyl group of 22-deacetylyanuthone A to produce yanuthone E. The terpene cyclase macJ catalyzes the cyclization of 22-deacetylyanuthone A to macrophorin A. MacJ is also able to catalyze cyclization of yanuthone E and 7-deacetoxyyanuthone A to their corresponding macrophorins. The macJ products can be further modified by macH and macJ, as well as by the FAD-dependent monooxygenase macF, to produce additional macrophorins, including 4'-oxomacrophorin A, 4'-oxomacrophorin D and 4'-oxomacrophorin E. The sequence is that of Decarboxylase macB from Penicillium terrestre.